We begin with the raw amino-acid sequence, 206 residues long: Large ribosomal subunit protein uL4 (206 aa).

The disordered stretch occupies residues Thr48–Gln75.

Belongs to the universal ribosomal protein uL4 family. Part of the 50S ribosomal subunit.

Its function is as follows. One of the primary rRNA binding proteins, this protein initially binds near the 5'-end of the 23S rRNA. It is important during the early stages of 50S assembly. It makes multiple contacts with different domains of the 23S rRNA in the assembled 50S subunit and ribosome. Functionally, forms part of the polypeptide exit tunnel. This Clostridium botulinum (strain Loch Maree / Type A3) protein is Large ribosomal subunit protein uL4.